The sequence spans 284 residues: Bifunctional protein FolD 1 (284 aa).

NADP(+) is bound by residues 166–168 (GAS), Ser-191, and Ile-232.

This sequence belongs to the tetrahydrofolate dehydrogenase/cyclohydrolase family. Homodimer.

The enzyme catalyses (6R)-5,10-methylene-5,6,7,8-tetrahydrofolate + NADP(+) = (6R)-5,10-methenyltetrahydrofolate + NADPH. The catalysed reaction is (6R)-5,10-methenyltetrahydrofolate + H2O = (6R)-10-formyltetrahydrofolate + H(+). It functions in the pathway one-carbon metabolism; tetrahydrofolate interconversion. Functionally, catalyzes the oxidation of 5,10-methylenetetrahydrofolate to 5,10-methenyltetrahydrofolate and then the hydrolysis of 5,10-methenyltetrahydrofolate to 10-formyltetrahydrofolate. The polypeptide is Bifunctional protein FolD 1 (Hydrogenovibrio crunogenus (strain DSM 25203 / XCL-2) (Thiomicrospira crunogena)).